The primary structure comprises 191 residues: Small ribosomal subunit protein eS7 (191 aa).

Met1 carries the N-acetylmethionine modification.

It belongs to the eukaryotic ribosomal protein eS7 family.

This is Small ribosomal subunit protein eS7 (RPS7) from Brassica oleracea (Wild cabbage).